The primary structure comprises 267 residues: Integral membrane protein 2C (267 aa).

A Phosphothreonine modification is found at Thr37. Residues 55–75 (VGGVCYLSMGMVVLLMGLVFA) traverse the membrane as a helical; Signal-anchor for type II membrane protein segment. The BRICHOS domain occupies 136–230 (FGGGDPADII…LCNGKDTYRL (95 aa)). Residues Cys163 and Cys222 are joined by a disulfide bond. Asn169 carries an N-linked (GlcNAc...) asparagine glycan.

The protein belongs to the ITM2 family. As to quaternary structure, interacts with BACE1. Interacts with APP. Interacts with STMN2. Type I membrane-bound, as well as soluble, furin has a pre-eminent role in ITM2C proteolytic processing. PCSK7 and PCSK5 may also be involved although to a lesser extent. The soluble form of PCSK7 is incapable of processing ITM2C. Fails to undergo shedding by ADAM10 and intramembrane cleavage by SPPL2B.

The protein resides in the lysosome membrane. The protein localises to the cell membrane. Negative regulator of amyloid-beta peptide production. May inhibit the processing of APP by blocking its access to alpha- and beta-secretase. Binding to the beta-secretase-cleaved APP C-terminal fragment is negligible, suggesting that ITM2C is a poor gamma-secretase cleavage inhibitor. May play a role in TNF-induced cell death and neuronal differentiation. The polypeptide is Integral membrane protein 2C (ITM2C) (Pongo abelii (Sumatran orangutan)).